Here is a 318-residue protein sequence, read N- to C-terminus: Taste receptor type 2 member 60 (318 aa).

Residues 1 to 7 (MNGDHMV) lie on the Extracellular side of the membrane. The chain crosses the membrane as a helical span at residues 8 to 28 (LGSSVTDKKAIILVTILLLLR). Over 29–40 (LVAIAGNGFITA) the chain is Cytoplasmic. The chain crosses the membrane as a helical span at residues 41-61 (ALGVEWVLRRMLLPCDKLLVS). Residues 62–88 (LGASHFCLQSVVMGKTIYVFLYPMAFP) are Extracellular-facing. A helical membrane pass occupies residues 89 to 109 (YNPVLQFLAFQWDFLNAATLW). The Cytoplasmic segment spans residues 110 to 128 (FSTWLSVFYCVKIATFTHP). A helical transmembrane segment spans residues 129–149 (VFFWLKHKLSGWLPWMIFSYV). The Extracellular portion of the chain corresponds to 150–183 (GLSSFTTILFFIGNHRMYQNYLKNHLQPWNVTGN). N-linked (GlcNAc...) asparagine glycosylation is present at Asn179. The helical transmembrane segment at 184-204 (SIRSYCEKFYLFPLKMITWTM) threads the bilayer. The Cytoplasmic segment spans residues 205 to 234 (PTAVFFICMILLITSLGRHMKKALLTTSGF). A helical transmembrane segment spans residues 235-255 (REPSVQAHIKALLALLSFAML). Residues 256–264 (FISYFLSLV) lie on the Extracellular side of the membrane. The helical transmembrane segment at 265–285 (FSAAGIFPPLDFKFWVWESVI) threads the bilayer. The Cytoplasmic segment spans residues 286-318 (YLCAAVHPIILLFSNCRLRAVLKSRRSSRCGTP).

The protein belongs to the G-protein coupled receptor T2R family.

The protein localises to the membrane. In terms of biological role, receptor that may play a role in the perception of bitterness and is gustducin-linked. May play a role in sensing the chemical composition of the gastrointestinal content. The activity of this receptor may stimulate alpha gustducin, mediate PLC-beta-2 activation and lead to the gating of TRPM5. This is Taste receptor type 2 member 60 (TAS2R60) from Pan paniscus (Pygmy chimpanzee).